The sequence spans 314 residues: tRNA dimethylallyltransferase (314 aa).

Position 10–17 (10–17 (GPTAVGKT)) interacts with ATP. 12–17 (TAVGKT) provides a ligand contact to substrate. The tract at residues 35-38 (DSMQ) is interaction with substrate tRNA.

This sequence belongs to the IPP transferase family. In terms of assembly, monomer. Mg(2+) is required as a cofactor.

The enzyme catalyses adenosine(37) in tRNA + dimethylallyl diphosphate = N(6)-dimethylallyladenosine(37) in tRNA + diphosphate. Catalyzes the transfer of a dimethylallyl group onto the adenine at position 37 in tRNAs that read codons beginning with uridine, leading to the formation of N6-(dimethylallyl)adenosine (i(6)A). The polypeptide is tRNA dimethylallyltransferase (Clostridium novyi (strain NT)).